A 134-amino-acid chain; its full sequence is Small ribosomal subunit protein uS11 (134 aa).

This sequence belongs to the universal ribosomal protein uS11 family. Part of the 30S ribosomal subunit. Interacts with proteins S7 and S18. Binds to IF-3.

Functionally, located on the platform of the 30S subunit, it bridges several disparate RNA helices of the 16S rRNA. Forms part of the Shine-Dalgarno cleft in the 70S ribosome. In Micrococcus luteus (strain ATCC 4698 / DSM 20030 / JCM 1464 / CCM 169 / CCUG 5858 / IAM 1056 / NBRC 3333 / NCIMB 9278 / NCTC 2665 / VKM Ac-2230) (Micrococcus lysodeikticus), this protein is Small ribosomal subunit protein uS11.